Here is a 545-residue protein sequence, read N- to C-terminus: Chaperonin GroEL 2 (545 aa).

Residues 29 to 32, 86 to 90, Gly-413, 479 to 481, and Asp-495 each bind ATP; these read TLGP, DGTTT, and NAA.

It belongs to the chaperonin (HSP60) family. In terms of assembly, forms a cylinder of 14 subunits composed of two heptameric rings stacked back-to-back. Interacts with the co-chaperonin GroES.

It is found in the cytoplasm. The enzyme catalyses ATP + H2O + a folded polypeptide = ADP + phosphate + an unfolded polypeptide.. Together with its co-chaperonin GroES, plays an essential role in assisting protein folding. The GroEL-GroES system forms a nano-cage that allows encapsulation of the non-native substrate proteins and provides a physical environment optimized to promote and accelerate protein folding. This chain is Chaperonin GroEL 2, found in Prochlorococcus marinus (strain MIT 9301).